The following is a 327-amino-acid chain: uncharacterized protein (327 aa).

The S4 RNA-binding domain occupies 12–79; it reads KRLDEFLAKE…LKKELDLEIE (68 aa). D136 is a catalytic residue.

Belongs to the pseudouridine synthase RluA family.

It catalyses the reaction a uridine in RNA = a pseudouridine in RNA. This is an uncharacterized protein from Helicobacter pylori (strain ATCC 700392 / 26695) (Campylobacter pylori).